A 610-amino-acid chain; its full sequence is Probable methyltransferase PMT22 (610 aa).

Over 1-10 (MIKNIFQSRK) the chain is Cytoplasmic. Residues 11–31 (LSGLCVLSILLVSVTILLLTN) form a helical; Signal-anchor for type II membrane protein membrane-spanning segment. Residues 32–610 (DTIDLFPYLS…LVGLKSSWRP (579 aa)) are Lumenal-facing. Residues 56–69 (STPISSPTNDSSPP) show a composition bias toward low complexity. The interval 56 to 81 (STPISSPTNDSSPPLESPVNQTRVDD) is disordered. N-linked (GlcNAc...) asparagine glycans are attached at residues N64, N75, N100, N400, N469, and N546.

The protein belongs to the methyltransferase superfamily.

The protein localises to the endoplasmic reticulum membrane. The polypeptide is Probable methyltransferase PMT22 (Arabidopsis thaliana (Mouse-ear cress)).